Here is a 238-residue protein sequence, read N- to C-terminus: Probable metal transport system ATP-binding protein TP_0035 (238 aa).

One can recognise an ABC transporter domain in the interval 10–231; that stretch reads VLLQNVSFRY…LDMQKKDALA (222 aa). ATP is bound at residue 44 to 51; sequence GENGSGKS.

This sequence belongs to the ABC transporter superfamily.

It localises to the cell inner membrane. Part of an ATP-driven transport system TP_0034/TP_0035/TP_0036 for a metal. Probably responsible for energy coupling to the transport system. In Treponema pallidum (strain Nichols), this protein is Probable metal transport system ATP-binding protein TP_0035.